A 319-amino-acid polypeptide reads, in one-letter code: Coiled-coil domain-containing protein 149 (319 aa).

Coiled coils occupy residues methionine 1–serine 199 and isoleucine 259–serine 286. The helical transmembrane segment at valine 298–valine 318 threads the bilayer.

Belongs to the CCDC149 family.

The protein resides in the membrane. This chain is Coiled-coil domain-containing protein 149 (CCDC149), found in Bos taurus (Bovine).